The following is a 627-amino-acid chain: uncharacterized protein (627 aa).

One can recognise a WH1 domain in the interval glycine 21–serine 136. The segment at arginine 310–valine 347 is disordered.

This is an uncharacterized protein from Caenorhabditis elegans.